Reading from the N-terminus, the 488-residue chain is Capsid protein (488 aa).

Residues 80–93 (ISEDESDSGEEPEF) show a composition bias toward acidic residues. The tract at residues 80-143 (ISEDESDSGE…QPKTIPGQKQ (64 aa)) is disordered. Residues 94 to 109 (EQVRMDRTGGTEIPKE) are compositionally biased toward basic and acidic residues. Positions 121–124 (RKRK) match the Nuclear localization signal motif. Residues 134 to 143 (QPKTIPGQKQ) are compositionally biased toward polar residues. The CCHC-type zinc finger occupies 410-427 (CRCWICNIEGHYANECPN). Residues 463–488 (YKEEEEETSTEESDDESSTSEDSDSD) form a disordered region. The span at 464–488 (KEEEEETSTEESDDESSTSEDSDSD) shows a compositional bias: acidic residues.

It belongs to the caulimoviridae capsid protein family. As to quaternary structure, interacts (via nuclear localization signal) with host importin alpha.

The protein resides in the virion. Its subcellular location is the host nucleus. Its function is as follows. Self assembles to form an icosahedral capsid, about 50 nm in diameter, nm, composed of 420 subunits of the viral capsid protein. The capsid encapsulates the genomic dsDNA. Following virus entry into host cell, provides nuclear import of the viral genome. Virus particles do not enter the nucleus, but dock at the nuclear membrane through the interaction with host importins. The protein is Capsid protein of Arabidopsis thaliana (Mouse-ear cress).